Reading from the N-terminus, the 388-residue chain is L-lactate dehydrogenase (388 aa).

One can recognise an FMN hydroxy acid dehydrogenase domain in the interval 1 to 380; sequence MIISAASDYR…SADALSRVTR (380 aa). Tyr24 serves as a coordination point for substrate. Residues Ser106 and Gln127 each contribute to the FMN site. Tyr129 serves as a coordination point for substrate. Thr155 serves as a coordination point for FMN. Arg164 contacts substrate. Position 251 (Lys251) interacts with FMN. Residue His275 is the Proton acceptor of the active site. Arg278 serves as a coordination point for substrate. 306–330 is a binding site for FMN; it reads DSGIRSGLDVVRMLALGADAVLLGR.

This sequence belongs to the FMN-dependent alpha-hydroxy acid dehydrogenase family. The cofactor is FMN.

It is found in the cell inner membrane. The enzyme catalyses (S)-lactate + A = pyruvate + AH2. Functionally, catalyzes the conversion of L-lactate to pyruvate. Is coupled to the respiratory chain. In Xanthomonas oryzae pv. oryzae (strain MAFF 311018), this protein is L-lactate dehydrogenase.